The following is a 116-amino-acid chain: Large ribosomal subunit protein bL17 (116 aa).

This sequence belongs to the bacterial ribosomal protein bL17 family. As to quaternary structure, part of the 50S ribosomal subunit. Contacts protein L32.

In Nostoc punctiforme (strain ATCC 29133 / PCC 73102), this protein is Large ribosomal subunit protein bL17.